Consider the following 300-residue polypeptide: Ribosomal RNA small subunit methyltransferase H (300 aa).

S-adenosyl-L-methionine is bound by residues 46–48 (GGH), Asp-65, Phe-92, Asp-107, and Gln-114.

The protein belongs to the methyltransferase superfamily. RsmH family.

It is found in the cytoplasm. It carries out the reaction cytidine(1402) in 16S rRNA + S-adenosyl-L-methionine = N(4)-methylcytidine(1402) in 16S rRNA + S-adenosyl-L-homocysteine + H(+). Functionally, specifically methylates the N4 position of cytidine in position 1402 (C1402) of 16S rRNA. The protein is Ribosomal RNA small subunit methyltransferase H of Prochlorococcus marinus (strain MIT 9312).